The sequence spans 985 residues: Probable oxidoreductase YjgC (985 aa).

The 77-residue stretch at 3–79 folds into the 2Fe-2S ferredoxin-type domain; sequence GKKTITINGV…GDVIDTLSPD (77 aa). Residues cysteine 37, cysteine 48, cysteine 51, and cysteine 63 each contribute to the [2Fe-2S] cluster site. The 4Fe-4S His(Cys)3-ligated-type domain occupies 79–119; the sequence is DVKKAQVIGMDKILYNHELYCTVCDYNNGGCEIHNTVKEMK. Residues histidine 95, cysteine 99, cysteine 102, cysteine 109, cysteine 148, cysteine 151, cysteine 154, cysteine 158, cysteine 191, cysteine 194, cysteine 197, cysteine 201, cysteine 265, cysteine 268, cysteine 272, and cysteine 300 each coordinate [4Fe-4S] cluster. 4Fe-4S ferredoxin-type domains follow at residues 139-170 and 182-211; these read PFYRYDPDQCILCGRCVEACQDVQVTETLTID and NDVPINESSCVSCGHCSTVCPCNAMMEKGM. One can recognise a 4Fe-4S Mo/W bis-MGD-type domain in the interval 258-314; sequence IKKTKTVCTYCGVGCSFDVWTKGRDILKVEPQEEAPANGISTCVKGKFGWDFVNSEE.

It in the C-terminal section; belongs to the prokaryotic molybdopterin-containing oxidoreductase family. The cofactor is [2Fe-2S] cluster. Requires [4Fe-4S] cluster as cofactor. It depends on Mo-bis(molybdopterin guanine dinucleotide) as a cofactor.

This is Probable oxidoreductase YjgC (yjgC) from Bacillus subtilis (strain 168).